The chain runs to 576 residues: Arginine--tRNA ligase (576 aa).

Residues 122–132 carry the 'HIGH' region motif; that stretch reads PNVAKEMHVGH.

It belongs to the class-I aminoacyl-tRNA synthetase family. Monomer.

It localises to the cytoplasm. It catalyses the reaction tRNA(Arg) + L-arginine + ATP = L-arginyl-tRNA(Arg) + AMP + diphosphate. This is Arginine--tRNA ligase from Sodalis glossinidius (strain morsitans).